We begin with the raw amino-acid sequence, 526 residues long: tRNA-2-methylthio-N(6)-dimethylallyladenosine synthase (526 aa).

The tract at residues 1–24 (MTQQLNHAKVNQHPGQATLPETAE) is disordered. The region spanning 28–144 (RTYEVKTYGC…LPTLLQRAEH (117 aa)) is the MTTase N-terminal domain. The [4Fe-4S] cluster site is built by Cys-37, Cys-73, Cys-107, Cys-181, Cys-185, and Cys-188. The Radical SAM core domain occupies 167 to 403 (RESAYAGWVS…MVVQEQVCEE (237 aa)). The TRAM domain occupies 406 to 477 (QKLIGTTVEL…PFFLIADSGV (72 aa)).

This sequence belongs to the methylthiotransferase family. MiaB subfamily. As to quaternary structure, monomer. [4Fe-4S] cluster serves as cofactor.

Its subcellular location is the cytoplasm. The enzyme catalyses N(6)-dimethylallyladenosine(37) in tRNA + (sulfur carrier)-SH + AH2 + 2 S-adenosyl-L-methionine = 2-methylsulfanyl-N(6)-dimethylallyladenosine(37) in tRNA + (sulfur carrier)-H + 5'-deoxyadenosine + L-methionine + A + S-adenosyl-L-homocysteine + 2 H(+). Its function is as follows. Catalyzes the methylthiolation of N6-(dimethylallyl)adenosine (i(6)A), leading to the formation of 2-methylthio-N6-(dimethylallyl)adenosine (ms(2)i(6)A) at position 37 in tRNAs that read codons beginning with uridine. This Corynebacterium glutamicum (strain R) protein is tRNA-2-methylthio-N(6)-dimethylallyladenosine synthase.